A 124-amino-acid polypeptide reads, in one-letter code: uncharacterized protein (124 aa).

Residues 83–100 traverse the membrane as a helical segment; that stretch reads VTCFSLYTICYRIVLIWA.

It is found in the membrane. This is an uncharacterized protein from Saccharomyces cerevisiae (strain ATCC 204508 / S288c) (Baker's yeast).